The sequence spans 455 residues: Putative O-acetyltransferase SAT14 (455 aa).

Belongs to the lysine N-acyltransferase MbtK family.

It functions in the pathway mycotoxin biosynthesis. Its function is as follows. Putative O-acetyltransferase; part of the satratoxin SC2 cluster involved in the biosynthesis of satratoxins, trichothecene mycotoxins that are associated with human food poisonings. Satratoxins are suggested to be made by products of multiple gene clusters (SC1, SC2 and SC3) that encode 21 proteins in all, including polyketide synthases, acetyltransferases, and other enzymes expected to modify the trichothecene skeleton. SC1 encodes 10 proteins, SAT1 to SAT10. The largest are SAT8, which encodes a putative polyketide synthase (PKS) with a conventional non-reducing architecture, and SAT10, a putative protein containing four ankyrin repeats and thus may be involved in protein scaffolding. The putative short-chain reductase SAT3 may assist the PKS in some capacity. SAT6 contains a secretory lipase domain and acts probably as a trichothecene esterase. SAT5 encodes a putative acetyltransferase, and so, with SAT6, may affect endogenous protection from toxicity. The probable transcription factor SAT9 may regulate the expression of the SC1 cluster. SC2 encodes proteins SAT11 to SAT16, the largest of which encodes the putative reducing PKS SAT13. SAT11 is a cytochrome P450 monooxygenase, while SAT14 and SAT16 are probable acetyltransferases. The SC2 cluster may be regulated by the transcription factor SAT15. SC3 is a small cluster that encodes 5 proteins, SAT17 to SAT21. SAT21 is a putative MFS-type transporter which may have a role in exporting secondary metabolites. The four other proteins putatively encoded in SC3 include the taurine hydroxylase-like protein SAT17, the O-methyltransferase SAT18, the acetyltransferase SAT19, and the Cys6-type zinc finger SAT20, the latter being probably involved in regulation of SC3 expression. The polypeptide is Putative O-acetyltransferase SAT14 (Stachybotrys chartarum (strain CBS 109288 / IBT 7711) (Toxic black mold)).